A 96-amino-acid chain; its full sequence is Protein C4 (96 aa).

The N-myristoyl glycine; by host moiety is linked to residue Gly2. The disordered stretch occupies residues 66 to 96 (STDDLQGEDSRQPMTLTPRQLTQDVSRRLLM). Over residues 77–89 (QPMTLTPRQLTQD) the composition is skewed to polar residues.

This sequence belongs to the geminiviridae protein AC4/C4 family.

Its subcellular location is the host cell membrane. Its function is as follows. Pathogenicity determinant. May act as a suppressor of RNA-mediated gene silencing, also known as post-transcriptional gene silencing (PTGS), a mechanism of plant viral defense that limits the accumulation of viral RNAs. The chain is Protein C4 from Solanum lycopersicum (Tomato).